A 179-amino-acid chain; its full sequence is MISRSFLRLANPARRAMPAVKRVNMMPSMALPTKRLYHEKVLDHYSNPRNVGTLNKLDVDVGTGLVGAPACGDVMRLQIQVDDETGVIKDVKFKTFGCGSAIASSSYLTELVKGKTIEEAVKIKNTAIAKELSLPPVKLHCSMLAEDAIKSAVKDYRSKRSVKQPTLGPEAAQAETIAT.

A disordered region spans residues 160–179 (RSVKQPTLGPEAAQAETIAT).

It belongs to the NifU family. In terms of assembly, component of the core Fe-S cluster (ISC) assembly machinery. [2Fe-2S] cluster is required as a cofactor.

It is found in the mitochondrion matrix. It functions in the pathway cofactor biosynthesis; iron-sulfur cluster biosynthesis. Functionally, scaffold protein for the de novo synthesis of iron-sulfur (Fe-S) clusters within mitochondria, which is required for maturation of both mitochondrial and cytoplasmic [2Fe-2S] and [4Fe-4S] proteins. First, a [2Fe-2S] cluster is transiently assembled on the scaffold protein ISU1. In a second step, the cluster is released from ISU1, transferred to a glutaredoxin, followed by the formation of mitochondrial [2Fe-2S] proteins, the synthesis of [4Fe-4S] clusters and their target-specific insertion into the recipient apoproteins. Cluster assembly on ISU1 depends on the function of the cysteine desulfurase complex NFS1-ISD11, which serves as the sulfur donor for cluster synthesis, the iron-binding protein frataxin as the putative iron donor, and the electron transfer chain comprised of ferredoxin reductase and ferredoxin, which receive their electrons from NADH. In Debaryomyces hansenii (strain ATCC 36239 / CBS 767 / BCRC 21394 / JCM 1990 / NBRC 0083 / IGC 2968) (Yeast), this protein is Iron sulfur cluster assembly protein 1, mitochondrial (ISU1).